Consider the following 186-residue polypeptide: Peptide deformylase (186 aa).

Positions 113 and 157 each coordinate Fe cation. Glu-158 is a catalytic residue. His-161 serves as a coordination point for Fe cation.

It belongs to the polypeptide deformylase family. Requires Fe(2+) as cofactor.

It catalyses the reaction N-terminal N-formyl-L-methionyl-[peptide] + H2O = N-terminal L-methionyl-[peptide] + formate. Functionally, removes the formyl group from the N-terminal Met of newly synthesized proteins. Requires at least a dipeptide for an efficient rate of reaction. N-terminal L-methionine is a prerequisite for activity but the enzyme has broad specificity at other positions. The chain is Peptide deformylase from Malacoplasma penetrans (strain HF-2) (Mycoplasma penetrans).